A 416-amino-acid polypeptide reads, in one-letter code: Serine hydroxymethyltransferase (416 aa).

(6S)-5,6,7,8-tetrahydrofolate-binding positions include L118 and 122–124 (GHL). Position 226 is an N6-(pyridoxal phosphate)lysine (K226). Residues E242 and 350-352 (SPF) contribute to the (6S)-5,6,7,8-tetrahydrofolate site.

The protein belongs to the SHMT family. Homodimer. The cofactor is pyridoxal 5'-phosphate.

Its subcellular location is the cytoplasm. It catalyses the reaction (6R)-5,10-methylene-5,6,7,8-tetrahydrofolate + glycine + H2O = (6S)-5,6,7,8-tetrahydrofolate + L-serine. It functions in the pathway one-carbon metabolism; tetrahydrofolate interconversion. It participates in amino-acid biosynthesis; glycine biosynthesis; glycine from L-serine: step 1/1. Its function is as follows. Catalyzes the reversible interconversion of serine and glycine with tetrahydrofolate (THF) serving as the one-carbon carrier. This reaction serves as the major source of one-carbon groups required for the biosynthesis of purines, thymidylate, methionine, and other important biomolecules. Also exhibits THF-independent aldolase activity toward beta-hydroxyamino acids, producing glycine and aldehydes, via a retro-aldol mechanism. The sequence is that of Serine hydroxymethyltransferase from Helicobacter pylori (strain Shi470).